A 689-amino-acid polypeptide reads, in one-letter code: DNA topoisomerase 1 (689 aa).

In terms of domain architecture, Toprim spans 3–113 (DNLVIVESPA…KENRVVFNEI (111 aa)). Mg(2+)-binding residues include Glu-9 and Asp-82. One can recognise a Topo IA-type catalytic domain in the interval 129-557 (EMNLVDAQQA…FFSSFKQDVE (429 aa)). The segment at 163-168 (SAGRVQ) is interaction with DNA. The active-site O-(5'-phospho-DNA)-tyrosine intermediate is the Tyr-298. Residues 328-357 (SKRKASGKQGDQDAHEAIRPSSTMRTPDDM) form a disordered region. C4-type zinc fingers lie at residues 577-603 (CEVC…FPDC), 617-645 (CPKC…YPEC), and 658-681 (CPKC…CSNC).

The protein belongs to the type IA topoisomerase family. In terms of assembly, monomer. It depends on Mg(2+) as a cofactor.

It catalyses the reaction ATP-independent breakage of single-stranded DNA, followed by passage and rejoining.. Releases the supercoiling and torsional tension of DNA, which is introduced during the DNA replication and transcription, by transiently cleaving and rejoining one strand of the DNA duplex. Introduces a single-strand break via transesterification at a target site in duplex DNA. The scissile phosphodiester is attacked by the catalytic tyrosine of the enzyme, resulting in the formation of a DNA-(5'-phosphotyrosyl)-enzyme intermediate and the expulsion of a 3'-OH DNA strand. The free DNA strand then undergoes passage around the unbroken strand, thus removing DNA supercoils. Finally, in the religation step, the DNA 3'-OH attacks the covalent intermediate to expel the active-site tyrosine and restore the DNA phosphodiester backbone. This Staphylococcus aureus (strain bovine RF122 / ET3-1) protein is DNA topoisomerase 1.